A 401-amino-acid polypeptide reads, in one-letter code: Argininosuccinate synthase (401 aa).

Ala-8 to Ser-16 is an ATP binding site. Tyr-87 is a binding site for L-citrulline. An ATP-binding site is contributed by Gly-117. Thr-119, Asn-123, and Asp-124 together coordinate L-aspartate. Asn-123 serves as a coordination point for L-citrulline. Arg-127, Ser-175, Glu-259, and Tyr-271 together coordinate L-citrulline.

Belongs to the argininosuccinate synthase family. Type 1 subfamily. As to quaternary structure, homotetramer.

It is found in the cytoplasm. The catalysed reaction is L-citrulline + L-aspartate + ATP = 2-(N(omega)-L-arginino)succinate + AMP + diphosphate + H(+). It functions in the pathway amino-acid biosynthesis; L-arginine biosynthesis; L-arginine from L-ornithine and carbamoyl phosphate: step 2/3. This chain is Argininosuccinate synthase, found in Corynebacterium efficiens (strain DSM 44549 / YS-314 / AJ 12310 / JCM 11189 / NBRC 100395).